Reading from the N-terminus, the 176-residue chain is Replication restart protein PriC (176 aa).

Belongs to the PriC family. In terms of assembly, component of the replication restart primosome, which is composed of PriA, PriB, PriC, DnaB and DnaT; DnaG primase associates transiently with this complex. Interacts with the C-terminus of SSB; this interaction is required to load the main replicative helicase onto substrate replication forks. Interacts with helicase DnaB alone and in the DnaB-DnaC complex, probably 1:1 binding with DnaB. Interacts with DnaT.

Functionally, involved in the restart of stalled replication forks, which reloads the DnaB replicative helicase on sites other than the origin of replication. Recognizes abandoned replication forks and remodels DNA single-stranded binding protein (SSB) on ssDNA to uncover a loading site for DnaB. There are several restart pathways, the PriA-PriC pathway is a minor restart pathway. Part of the minor PriC-Rep pathway for restart of stalled replication forks, which has a different substrate specificity than PriA. Part of the major restart pathway with PriA, PriB, DnaB, DnaT and DnaG primase. priB and priC have redundant roles in the cell. Binds 7-9 nucleotides of single-stranded (ss)DNA. The protein is Replication restart protein PriC of Klebsiella pneumoniae subsp. pneumoniae (strain ATCC 700721 / MGH 78578).